The sequence spans 449 residues: Gamma-glutamyl phosphate reductase (449 aa).

This sequence belongs to the gamma-glutamyl phosphate reductase family.

It localises to the cytoplasm. It carries out the reaction L-glutamate 5-semialdehyde + phosphate + NADP(+) = L-glutamyl 5-phosphate + NADPH + H(+). It functions in the pathway amino-acid biosynthesis; L-proline biosynthesis; L-glutamate 5-semialdehyde from L-glutamate: step 2/2. In terms of biological role, catalyzes the NADPH-dependent reduction of L-glutamate 5-phosphate into L-glutamate 5-semialdehyde and phosphate. The product spontaneously undergoes cyclization to form 1-pyrroline-5-carboxylate. The polypeptide is Gamma-glutamyl phosphate reductase (Methanococcoides burtonii (strain DSM 6242 / NBRC 107633 / OCM 468 / ACE-M)).